The following is a 201-amino-acid chain: 3-isopropylmalate dehydratase small subunit (201 aa).

This sequence belongs to the LeuD family. LeuD type 1 subfamily. As to quaternary structure, heterodimer of LeuC and LeuD.

It carries out the reaction (2R,3S)-3-isopropylmalate = (2S)-2-isopropylmalate. Its pathway is amino-acid biosynthesis; L-leucine biosynthesis; L-leucine from 3-methyl-2-oxobutanoate: step 2/4. Catalyzes the isomerization between 2-isopropylmalate and 3-isopropylmalate, via the formation of 2-isopropylmaleate. The polypeptide is 3-isopropylmalate dehydratase small subunit (Methylorubrum extorquens (strain ATCC 14718 / DSM 1338 / JCM 2805 / NCIMB 9133 / AM1) (Methylobacterium extorquens)).